A 219-amino-acid chain; its full sequence is MSRISKSEMSRLLSVYFIMGSNNCTKDPLQVLREALEGGITIFQFREKGEGALTEEKRICFAKELQAICKEYGVPFIVNDDVELALELDADGVHVGQDDEGITSVREKMGDKIVGVSTHTIEEARWAIENGADYLGVGPIFPTSTKKDTKAVQGTKGLAHFREQGITIPIVGIGGISIENTASVIEAGADGVSVISAISLAESAYESTKRLVEEVSNSL.

Residues 44 to 48 (QFREK) and Asn-79 each bind 4-amino-2-methyl-5-(diphosphooxymethyl)pyrimidine. Mg(2+)-binding residues include Asp-80 and Asp-99. Position 117 (Ser-117) interacts with 4-amino-2-methyl-5-(diphosphooxymethyl)pyrimidine. 143-145 (TST) is a 2-[(2R,5Z)-2-carboxy-4-methylthiazol-5(2H)-ylidene]ethyl phosphate binding site. Lys-146 is a 4-amino-2-methyl-5-(diphosphooxymethyl)pyrimidine binding site. 2-[(2R,5Z)-2-carboxy-4-methylthiazol-5(2H)-ylidene]ethyl phosphate contacts are provided by residues Gly-175 and 195–196 (IS).

The protein belongs to the thiamine-phosphate synthase family. It depends on Mg(2+) as a cofactor.

The enzyme catalyses 2-[(2R,5Z)-2-carboxy-4-methylthiazol-5(2H)-ylidene]ethyl phosphate + 4-amino-2-methyl-5-(diphosphooxymethyl)pyrimidine + 2 H(+) = thiamine phosphate + CO2 + diphosphate. It catalyses the reaction 2-(2-carboxy-4-methylthiazol-5-yl)ethyl phosphate + 4-amino-2-methyl-5-(diphosphooxymethyl)pyrimidine + 2 H(+) = thiamine phosphate + CO2 + diphosphate. The catalysed reaction is 4-methyl-5-(2-phosphooxyethyl)-thiazole + 4-amino-2-methyl-5-(diphosphooxymethyl)pyrimidine + H(+) = thiamine phosphate + diphosphate. The protein operates within cofactor biosynthesis; thiamine diphosphate biosynthesis; thiamine phosphate from 4-amino-2-methyl-5-diphosphomethylpyrimidine and 4-methyl-5-(2-phosphoethyl)-thiazole: step 1/1. Condenses 4-methyl-5-(beta-hydroxyethyl)thiazole monophosphate (THZ-P) and 2-methyl-4-amino-5-hydroxymethyl pyrimidine pyrophosphate (HMP-PP) to form thiamine monophosphate (TMP). This Bacillus cereus (strain AH187) protein is Thiamine-phosphate synthase.